Here is a 383-residue protein sequence, read N- to C-terminus: Envelope glycoprotein D (383 aa).

An N-terminal signal peptide occupies residues 1 to 30 (MPAATMATPGYLACRTSVATLLFFVLLRRA). The Virion surface portion of the chain corresponds to 31–358 (AILGAGGAPS…PKVVGPTVGP (328 aa)). Cystine bridges form between C76–C197, C115–C212, and C127–C136. The interval 244–311 (YQDKLKVASP…TSASGVIEIE (68 aa)) is profusion. Residues 315-349 (ESDVRLVSYPPPTLPSPGPGGNENGAGYSDNRPDP) form a disordered region. Residues 323-332 (YPPPTLPSPG) show a composition bias toward pro residues. The chain crosses the membrane as a helical span at residues 359 to 379 (GAIILVVMCAPILIGLTAFTI). Topologically, residues 380 to 383 (RKYC) are intravirion.

This sequence belongs to the herpesviridae glycoprotein D family.

The protein resides in the virion membrane. Envelope glycoprotein that binds to host cell entry receptors, promoting the virus entry into host cells. May trigger fusion with host membrane, by recruiting the fusion machinery composed of gB and gH/gL. The polypeptide is Envelope glycoprotein D (US6) (Amazona oratrix (yellow-headed parrot)).